A 190-amino-acid polypeptide reads, in one-letter code: Dual-action ribosomal maturation protein DarP (190 aa).

The tract at residues 1-31 is disordered; that stretch reads MIHADHDDNLPDDEEGLPLPPSKSQRKRDMH.

Belongs to the DarP family.

It is found in the cytoplasm. In terms of biological role, member of a network of 50S ribosomal subunit biogenesis factors which assembles along the 30S-50S interface, preventing incorrect 23S rRNA structures from forming. Promotes peptidyl transferase center (PTC) maturation. The polypeptide is Dual-action ribosomal maturation protein DarP (Aromatoleum aromaticum (strain DSM 19018 / LMG 30748 / EbN1) (Azoarcus sp. (strain EbN1))).